A 77-amino-acid chain; its full sequence is Large ribosomal subunit protein bL31 (77 aa).

Residues Cys-16, Cys-18, Cys-37, and Cys-40 each coordinate Zn(2+).

This sequence belongs to the bacterial ribosomal protein bL31 family. Type A subfamily. Part of the 50S ribosomal subunit. The cofactor is Zn(2+).

Its function is as follows. Binds the 23S rRNA. In Pseudomonas fluorescens (strain SBW25), this protein is Large ribosomal subunit protein bL31.